A 568-amino-acid chain; its full sequence is AP2-like ethylene-responsive transcription factor PLT2 (568 aa).

Over residues 151–171 (ASPAETSADNSSSTTNTSGGA) the composition is skewed to low complexity. Residues 151–173 (ASPAETSADNSSSTTNTSGGAIV) form a disordered region. 2 DNA-binding regions (AP2/ERF) span residues 190 to 256 (IYRG…TNFP) and 292 to 350 (MYRG…TNFE). The disordered stretch occupies residues 548–568 (WNSGESAQGSNPGGVFTMWNE).

The protein belongs to the AP2/ERF transcription factor family. AP2 subfamily. Stabilized in root meristems by reactive oxygen species (ROS) mediated oxidative post-translational modification triggered by RGF1 hormone peptide in a RITF1-dependent manner. Expressed in roots, seedlings, flowers, and siliques. Also detected at low levels in leaves. In roots, specifically detected in the distal root meristem, including the QC. This tissue specificity is regulated by auxin gradient and depends on PIN proteins.

It localises to the nucleus. Functionally, probably acts as a transcriptional activator. Binds to the GCC-box pathogenesis-related promoter element. May be involved in the regulation of gene expression by stress factors and by components of stress signal transduction pathways. Master regulator of basal/root fate. Essential for root quiescent center (QC) and columella specification, stem cell activity, as well as for establishment of the stem cell niche during embryogenesis. Modulates the root polar auxin transport by regulating the distribution of PIN genes. Essential role in respecifying pattern and polarity in damaged roots. Direct target of the transcriptional corepressor TPL. Expression levels and patterns regulated post-transcriptionally by root meristem growth factors (RGFs). The polypeptide is AP2-like ethylene-responsive transcription factor PLT2 (Arabidopsis thaliana (Mouse-ear cress)).